The primary structure comprises 447 residues: UPF0210 protein LSL_0162 (447 aa).

The protein belongs to the UPF0210 family. Homodimer.

The chain is UPF0210 protein LSL_0162 from Ligilactobacillus salivarius (strain UCC118) (Lactobacillus salivarius).